Consider the following 108-residue polypeptide: UPF0060 membrane protein amb3269 (108 aa).

Helical transmembrane passes span 4–24, 31–51, 59–79, and 85–105; these read IPTY…FWAW, PLWL…LTRI, AYAA…WAVE, and RWDT…IFGP.

The protein belongs to the UPF0060 family.

The protein localises to the cell inner membrane. This is UPF0060 membrane protein amb3269 from Paramagnetospirillum magneticum (strain ATCC 700264 / AMB-1) (Magnetospirillum magneticum).